A 246-amino-acid polypeptide reads, in one-letter code: Probable transcriptional regulatory protein HD_0596 (246 aa).

It belongs to the TACO1 family.

The protein localises to the cytoplasm. This chain is Probable transcriptional regulatory protein HD_0596, found in Haemophilus ducreyi (strain 35000HP / ATCC 700724).